The primary structure comprises 158 residues: NAD(P)H-quinone oxidoreductase subunit J, chloroplastic (158 aa).

Belongs to the complex I 30 kDa subunit family. In terms of assembly, NDH is composed of at least 16 different subunits, 5 of which are encoded in the nucleus.

Its subcellular location is the plastid. It is found in the chloroplast thylakoid membrane. It carries out the reaction a plastoquinone + NADH + (n+1) H(+)(in) = a plastoquinol + NAD(+) + n H(+)(out). It catalyses the reaction a plastoquinone + NADPH + (n+1) H(+)(in) = a plastoquinol + NADP(+) + n H(+)(out). Functionally, NDH shuttles electrons from NAD(P)H:plastoquinone, via FMN and iron-sulfur (Fe-S) centers, to quinones in the photosynthetic chain and possibly in a chloroplast respiratory chain. The immediate electron acceptor for the enzyme in this species is believed to be plastoquinone. Couples the redox reaction to proton translocation, and thus conserves the redox energy in a proton gradient. This Lotus japonicus (Lotus corniculatus var. japonicus) protein is NAD(P)H-quinone oxidoreductase subunit J, chloroplastic.